Reading from the N-terminus, the 313-residue chain is Proclavaminate amidinohydrolase (313 aa).

Residues H121, D144, H146, D148, D235, and D237 each coordinate Mn(2+).

It belongs to the arginase family. In terms of assembly, homohexamer. The cofactor is Mn(2+).

It catalyses the reaction amidinoproclavaminate + H2O = proclavaminate + urea. Its pathway is antibiotic biosynthesis; clavulanate biosynthesis; clavulanate from D-glyceraldehyde 3-phosphate and L-arginine: step 4/8. The polypeptide is Proclavaminate amidinohydrolase (pah) (Streptomyces clavuligerus).